The chain runs to 392 residues: Putative nicotinate phosphoribosyltransferase (392 aa).

Nicotinate contacts are provided by Y21, F138, and T179. The residue at position 182 (H182) is a Phosphohistidine. R235 is a nicotinate binding site. 5-phospho-alpha-D-ribose 1-diphosphate is bound by residues S240, G272, and T293. Zn(2+)-binding residues include C330, C333, C348, and C350.

It belongs to the NAPRTase family. Highly divergent. Homodimer. Forms a trimer of dimers in the crystal. Transiently phosphorylated on a His residue during the reaction cycle. Phosphorylation strongly increases the affinity for substrates and increases the rate of nicotinate D-ribonucleotide production. Dephosphorylation regenerates the low-affinity form of the enzyme, leading to product release.

It carries out the reaction nicotinate + 5-phospho-alpha-D-ribose 1-diphosphate + ATP + H2O = nicotinate beta-D-ribonucleotide + ADP + phosphate + diphosphate. Its pathway is cofactor biosynthesis; NAD(+) biosynthesis; nicotinate D-ribonucleotide from nicotinate: step 1/1. Catalyzes the synthesis of beta-nicotinate D-ribonucleotide from nicotinate and 5-phospho-D-ribose 1-phosphate at the expense of ATP. The protein is Putative nicotinate phosphoribosyltransferase of Thermoplasma acidophilum (strain ATCC 25905 / DSM 1728 / JCM 9062 / NBRC 15155 / AMRC-C165).